Consider the following 271-residue polypeptide: Solute carrier family 66 member 2 (271 aa).

3 helical membrane passes run 8 to 28, 49 to 69, and 76 to 96; these read WLLV…MVFG, FSTY…LFWF, and PLLW…KLCT. The 67-residue stretch at 14 to 80 folds into the PQ-loop 1 domain; that stretch reads HQLVSWGAAA…RRFESPLLWQ (67 aa). Phosphoserine is present on serine 110. 3 helical membrane-spanning segments follow: residues 145 to 165, 168 to 188, and 232 to 252; these read DYVQ…YLSI, ALFV…LGVP, and VCGL…YAFA. A PQ-loop 2 domain is found at 178 to 233; it reads AVLTEAMLGVPQLYRNHRHQSTEGMSIKMVLMWTSGDAFKTAYFLLKGAPLQFSVC.

The protein resides in the membrane. This chain is Solute carrier family 66 member 2, found in Homo sapiens (Human).